A 334-amino-acid chain; its full sequence is Ketol-acid reductoisomerase (NADP(+)) (334 aa).

The KARI N-terminal Rossmann domain maps to 1-181; it reads MTTVYYDQDV…GATRAGVIET (181 aa). Residues 25–28, Arg-48, Ser-52, and 82–85 each bind NADP(+); these read YGSQ and DEIQ. The active site involves His-107. Residue Gly-133 coordinates NADP(+). Positions 182 to 327 constitute a KARI C-terminal knotted domain; that stretch reads TFKEETETDL…RELREMMPFI (146 aa). The Mg(2+) site is built by Asp-190, Glu-194, Glu-226, and Glu-230. Ser-251 lines the substrate pocket.

It belongs to the ketol-acid reductoisomerase family. It depends on Mg(2+) as a cofactor.

The enzyme catalyses (2R)-2,3-dihydroxy-3-methylbutanoate + NADP(+) = (2S)-2-acetolactate + NADPH + H(+). The catalysed reaction is (2R,3R)-2,3-dihydroxy-3-methylpentanoate + NADP(+) = (S)-2-ethyl-2-hydroxy-3-oxobutanoate + NADPH + H(+). It participates in amino-acid biosynthesis; L-isoleucine biosynthesis; L-isoleucine from 2-oxobutanoate: step 2/4. The protein operates within amino-acid biosynthesis; L-valine biosynthesis; L-valine from pyruvate: step 2/4. Involved in the biosynthesis of branched-chain amino acids (BCAA). Catalyzes an alkyl-migration followed by a ketol-acid reduction of (S)-2-acetolactate (S2AL) to yield (R)-2,3-dihydroxy-isovalerate. In the isomerase reaction, S2AL is rearranged via a Mg-dependent methyl migration to produce 3-hydroxy-3-methyl-2-ketobutyrate (HMKB). In the reductase reaction, this 2-ketoacid undergoes a metal-dependent reduction by NADPH to yield (R)-2,3-dihydroxy-isovalerate. In Staphylococcus aureus (strain MSSA476), this protein is Ketol-acid reductoisomerase (NADP(+)).